The primary structure comprises 338 residues: Phosphate acyltransferase (338 aa).

Belongs to the PlsX family. In terms of assembly, homodimer. Probably interacts with PlsY.

It localises to the cytoplasm. It carries out the reaction a fatty acyl-[ACP] + phosphate = an acyl phosphate + holo-[ACP]. It functions in the pathway lipid metabolism; phospholipid metabolism. In terms of biological role, catalyzes the reversible formation of acyl-phosphate (acyl-PO(4)) from acyl-[acyl-carrier-protein] (acyl-ACP). This enzyme utilizes acyl-ACP as fatty acyl donor, but not acyl-CoA. This Endomicrobium trichonymphae protein is Phosphate acyltransferase.